The following is a 704-amino-acid chain: Polyribonucleotide nucleotidyltransferase (704 aa).

Positions 486 and 492 each coordinate Mg(2+). One can recognise a KH domain in the interval 553-612 (PKIVIVKINPDKIRDVIGPGGKQINKIIEETGVKIDTEQDGTIYISSANEEMNARAKQII). In terms of domain architecture, S1 motif spans 622–690 (GEYYLSTVKR…KQGRVNLSRK (69 aa)).

Belongs to the polyribonucleotide nucleotidyltransferase family. Requires Mg(2+) as cofactor.

Its subcellular location is the cytoplasm. It carries out the reaction RNA(n+1) + phosphate = RNA(n) + a ribonucleoside 5'-diphosphate. Its function is as follows. Involved in mRNA degradation. Catalyzes the phosphorolysis of single-stranded polyribonucleotides processively in the 3'- to 5'-direction. The sequence is that of Polyribonucleotide nucleotidyltransferase from Lysinibacillus sphaericus (strain C3-41).